Here is a 1918-residue protein sequence, read N- to C-terminus: NFX1-type zinc finger-containing protein 1 (1918 aa).

The segment covering 1–12 has biased composition (basic and acidic residues); sequence MEERRPHLDARP. 2 disordered regions span residues 1–58 and 75–140; these read MEER…RANN and RNPH…QPQQ. The span at 30 to 42 shows a compositional bias: low complexity; that stretch reads RARNQANNPPANA. The span at 82-105 shows a compositional bias: basic and acidic residues; that stretch reads RNQEGHASDEARDQRHDQENDTRW. Positions 120-129 are enriched in polar residues; that stretch reads SNDNFQQWRT. Positions 286–313 form a coiled coil; that stretch reads DIEEETEKNLEKVQTIIEHLQEKRREGT. 2 disordered regions span residues 796-819 and 876-896; these read SVSPAGPENTAQAEGDEEEEGEEE and TAAGQEQATGEWQTQRNQKKK. The segment covering 809–819 has biased composition (acidic residues); the sequence is EGDEEEEGEEE. Residues 877–887 show a composition bias toward polar residues; the sequence is AAGQEQATGEW. Residues 886 to 967 are a coiled coil; the sequence is EWQTQRNQKK…TSAERMAELR (82 aa). NF-X1-type zinc fingers lie at residues 1298–1320, 1330–1346, 1382–1400, 1441–1463, 1471–1488, and 1546–1564; these read CGHVCTRACHPYDSSHKEFQCMK, GHRCPLVCFQECQPCQV, CGHRCSHPCGEDCVQLCSE, CGHPCPGSCHSCFEGRFHERCQQ, CSHKCQEPCIGECPPCQR, and CGHPCIGLCGEPCPKKCRI. Positions 1741 to 1820 form a coiled coil; sequence LAKKRLSFTS…EKMEALKATL (80 aa). Residues 1827–1898 form an RZ-type zinc finger; it reads ISEEERVQIV…LASEMDGAQH (72 aa). 4 residues coordinate Zn(2+): Cys-1849, His-1853, Cys-1869, and Cys-1872.

Belongs to the ZNFX1 family. In terms of assembly, interacts with MAVS. As to expression, widely expressed.

The protein localises to the mitochondrion outer membrane. It localises to the cytoplasm. Its subcellular location is the stress granule. Its function is as follows. RNA-binding protein that initiates the antiviral response and is required to restrict the replication of RNA viruses. Acts as a double-stranded RNA (dsRNA) sensor that recognizes viral RNA and then interacts with MAVS to initiate the type I interferon response. Also required for immunity against some bacteria, such as mycobacteria. This chain is NFX1-type zinc finger-containing protein 1, found in Homo sapiens (Human).